We begin with the raw amino-acid sequence, 417 residues long: UPF0761 membrane protein Daci_4966 (417 aa).

The next 6 helical transmembrane spans lie at V49–F69, Q106–I126, V146–L166, F187–Y207, A235–T255, and L256–V276.

Belongs to the UPF0761 family.

Its subcellular location is the cell inner membrane. This is UPF0761 membrane protein Daci_4966 from Delftia acidovorans (strain DSM 14801 / SPH-1).